A 418-amino-acid chain; its full sequence is MLHPRARTMLLLSLPAVAIGIASSLILIVVMKIASVLQNLLWQRLPGTLGIAQDSPLWIIGVLTLTGIAVGLVIRFSQGHAGPDPACEPLIGAPVPPSALPGLIVALILGLAGGVSLGPEHPIMTVNIALAVAIGARLLPRVNRMEWTILASAGTIGALFGTPVAAALIFSQTLNGSSEVPLWDRLFAPLMAAAAGALTTGLFFHPHFSLPIAHYGQMEMTDILSGAIVAAIAIAAGMVAVWCLPRLHAMMHQMKNPVLVLGIGGFILGILGVIGGPVSLFKGLDEMQQMVANQAFSTSDYFLLAVIKLAALVVAAASGFRGGRIFPAVFVGVALGLMLHEHVPAVPAAITVSCAILGIVLVVTRDGWLSLFMAAVVVPNTTLLPLLCIVMLPAWLLLAGKPMMMVNRPKQQPPHDNV.

The next 11 helical transmembrane spans lie at 9–31 (MLLL…IVVM), 55–77 (SPLW…IRFS), 90–112 (LIGA…LGLA), 122–140 (PIMT…RLLP), 147–169 (WTIL…AALI), 189–211 (PLMA…FSLP), 223–244 (ILSG…VWCL), 259–281 (LVLG…VSLF), 301–323 (YFLL…FRGG), 343–363 (VPAV…VLVV), and 376–398 (VVVP…WLLL).

It belongs to the chloride channel (TC 2.A.49) family.

The protein localises to the cell membrane. In Escherichia coli O157:H7, this protein is Putative ion-transport protein YfeO (yfeO).